The following is a 179-amino-acid chain: Large ribosomal subunit protein uL5 (179 aa).

This sequence belongs to the universal ribosomal protein uL5 family. In terms of assembly, part of the 50S ribosomal subunit; part of the 5S rRNA/L5/L18/L25 subcomplex. Contacts the 5S rRNA and the P site tRNA. Forms a bridge to the 30S subunit in the 70S ribosome.

This is one of the proteins that bind and probably mediate the attachment of the 5S RNA into the large ribosomal subunit, where it forms part of the central protuberance. In the 70S ribosome it contacts protein S13 of the 30S subunit (bridge B1b), connecting the 2 subunits; this bridge is implicated in subunit movement. Contacts the P site tRNA; the 5S rRNA and some of its associated proteins might help stabilize positioning of ribosome-bound tRNAs. The sequence is that of Large ribosomal subunit protein uL5 from Buchnera aphidicola subsp. Acyrthosiphon pisum (strain APS) (Acyrthosiphon pisum symbiotic bacterium).